The chain runs to 805 residues: Angiotensin-converting enzyme 2 (805 aa).

Residues 1–17 (MSSSCWLLLSLVAVATA) form the signal peptide. Over 18–740 (QSLIEEKAES…LKPPYEPPVT (723 aa)) the chain is Extracellular. The 589-residue stretch at 19–607 (SLIEEKAESF…QNRNSTVGWS (589 aa)) folds into the Peptidase M2 domain. N53, N82, and N90 each carry an N-linked (GlcNAc...) asparagine glycan. C133 and C141 are oxidised to a cystine. R169 is a chloride binding site. Residue R273 coordinates substrate. N299 is a glycosylation site (N-linked (GlcNAc...) asparagine). C344 and C361 form a disulfide bridge. 345–346 (HP) provides a ligand contact to substrate. A Zn(2+)-binding site is contributed by H374. Residue E375 is the Proton acceptor of the active site. H378 and E402 together coordinate Zn(2+). N432 carries an N-linked (GlcNAc...) asparagine glycan. Residues W477 and K481 each coordinate chloride. H505 acts as the Proton donor in catalysis. Y515 is a binding site for substrate. C530 and C542 form a disulfide bridge. N-linked (GlcNAc...) asparagine glycans are attached at residues N546 and N601. Positions 614–805 (ADQSIKVRIS…QNSDDAQTSF (192 aa)) constitute a Collectrin-like domain. Residues 652–659 (REYFSREK) form an essential for cleavage by ADAM17 region. N660 and N690 each carry an N-linked (GlcNAc...) asparagine glycan. The interval 697–716 (RSEVEEAIRMSRGRINDIFG) is essential for cleavage by TMPRSS11D and TMPRSS2. The chain crosses the membrane as a helical span at residues 741–761 (IWLIIFGVVMGTVVVGIVILI). The Cytoplasmic segment spans residues 762-805 (VTGIKGRKKKNETKREENPYDSMDIGKGESNAGFQNSDDAQTSF). Residues 771–805 (KNETKREENPYDSMDIGKGESNAGFQNSDDAQTSF) are disordered. Residues 778-786 (ENPYDSMDI) carry the LIR motif. Y781 is modified (phosphotyrosine). The short motif at 781–784 (YDSM) is the Endocytic sorting signal element. The SH2-binding signature appears at 781–785 (YDSMD). The residue at position 783 (S783) is a Phosphoserine. K788 is covalently cross-linked (Glycyl lysine isopeptide (Lys-Gly) (interchain with G-Cter in ubiquitin)). The PTB motif lies at 792-795 (NAGF). Residues 793–805 (AGFQNSDDAQTSF) show a composition bias toward polar residues. The short motif at 803–805 (TSF) is the PDZ-binding element.

Belongs to the peptidase M2 family. In terms of assembly, homodimer. Interacts with the catalytically active form of TMPRSS2. Interacts with SLC6A19; this interaction is essential for expression and function of SLC6A19 in intestine. Interacts with ITGA5:ITGB1. Probably interacts (via endocytic sorting signal motif) with AP2M1; the interaction is inhibited by phosphorylation of Tyr-781. Interacts (via PDZ-binding motif) with NHERF1 (via PDZ domains); the interaction may enhance ACE2 membrane residence. It depends on Zn(2+) as a cofactor. Chloride is required as a cofactor. Glycosylated. Post-translationally, proteolytic cleavage by ADAM17 generates a secreted form. Also cleaved by serine proteases: TMPRSS2, TMPRSS11D and HPN/TMPRSS1. In terms of processing, phosphorylated. Phosphorylation at Tyr-781 probably inhibits interaction with AP2M1 and enables interactions with proteins containing SH2 domains. Ubiquitinated. Ubiquitinated on Lys-788 via 'Lys-48'-linked ubiquitin. 'Lys-48'-linked deubiquitinated by USP50 on the Lys-788; leading to its stabilization. As to expression, expressed in heart, kidney and forebrain. In testis, expression is restricted to Leydig cells. In heart, expressed in endothelial cells from small and large arteries, arterial smooth muscle cells, and myocytes (at protein level). Ubiquitously expressed, with highest levels in ileum, bladder and lung.

Its subcellular location is the secreted. It is found in the cell membrane. The protein localises to the cytoplasm. It localises to the cell projection. The protein resides in the cilium. Its subcellular location is the apical cell membrane. It catalyses the reaction angiotensin II + H2O = angiotensin-(1-7) + L-phenylalanine. The enzyme catalyses angiotensin I + H2O = angiotensin-(1-9) + L-leucine. The catalysed reaction is bradykinin(1-8) + H2O = bradykinin(1-7) + L-phenylalanine. It carries out the reaction neurotensin + H2O = neurotensin-(1-12) + L-leucine. It catalyses the reaction kinetensin + H2O = kinetensin-(1-8) + L-leucine. The enzyme catalyses dynorphin A-(1-13) + H2O = dynorphin A-(1-12) + L-lysine. The catalysed reaction is apelin-13 + H2O = apelin-12 + L-phenylalanine. It carries out the reaction [Pyr1]apelin-13 + H2O = [Pyr1]apelin-12 + L-phenylalanine. It catalyses the reaction apelin-17 + H2O = apelin-16 + L-phenylalanine. Activated by chloride and fluoride, but not bromide. Inhibited by MLN-4760, cFP_Leu, and EDTA, but not by the ACE inhibitors linosipril, captopril, enalaprilat. Essential counter-regulatory carboxypeptidase of the renin-angiotensin hormone system that is a critical regulator of blood volume, systemic vascular resistance, and thus cardiovascular homeostasis. Converts angiotensin I to angiotensin 1-9, a nine-amino acid peptide with anti-hypertrophic effects in cardiomyocytes, and angiotensin II to angiotensin 1-7, which then acts as a beneficial vasodilator and anti-proliferation agent, counterbalancing the actions of the vasoconstrictor angiotensin II. Also removes the C-terminal residue from three other vasoactive peptides, neurotensin, kinetensin, and des-Arg bradykinin, but is not active on bradykinin. Also cleaves other biological peptides, such as apelins, casomorphins and dynorphin A. Plays an important role in amino acid transport by acting as binding partner of amino acid transporter SLC6A19 in intestine, regulating trafficking, expression on the cell surface, and its catalytic activity. The chain is Angiotensin-converting enzyme 2 (Ace2) from Rattus norvegicus (Rat).